Reading from the N-terminus, the 58-residue chain is Large ribosomal subunit protein bL32 (58 aa).

It belongs to the bacterial ribosomal protein bL32 family.

This Limosilactobacillus fermentum (strain NBRC 3956 / LMG 18251) (Lactobacillus fermentum) protein is Large ribosomal subunit protein bL32.